The primary structure comprises 146 residues: Phospholipase A2, membrane associated (146 aa).

Residues Met1–Gly21 form the signal peptide. Disulfide bonds link Cys47–Cys139, Cys49–Cys65, Cys64–Cys119, Cys70–Cys146, Cys71–Cys112, Cys80–Cys105, and Cys98–Cys110. Ca(2+) is bound by residues His48, Gly50, and Gly52. The active site involves His68. Asp69 contacts Ca(2+). Asp113 is a catalytic residue.

Belongs to the phospholipase A2 family. Ca(2+) serves as cofactor.

It localises to the secreted. The protein localises to the cell membrane. It is found in the mitochondrion outer membrane. The enzyme catalyses a 1,2-diacyl-sn-glycero-3-phosphoethanolamine + H2O = a 1-acyl-sn-glycero-3-phosphoethanolamine + a fatty acid + H(+). The catalysed reaction is 1-hexadecanoyl-2-(9Z-octadecenoyl)-sn-glycero-3-phosphoethanolamine + H2O = 1-hexadecanoyl-sn-glycero-3-phosphoethanolamine + (9Z)-octadecenoate + H(+). It catalyses the reaction 1-hexadecanoyl-2-(9Z,12Z-octadecadienoyl)-sn-glycero-3-phosphoethanolamine + H2O = 1-hexadecanoyl-sn-glycero-3-phosphoethanolamine + (9Z,12Z)-octadecadienoate + H(+). It carries out the reaction 1-hexadecanoyl-2-(5Z,8Z,11Z,14Z-eicosatetraenoyl)-sn-glycero-3-phosphoethanolamine + H2O = 1-hexadecanoyl-sn-glycero-3-phosphoethanolamine + (5Z,8Z,11Z,14Z)-eicosatetraenoate + H(+). The enzyme catalyses N-hexadecanoyl-1,2-di-(9Z-octadecenoyl)-sn-glycero-3-phosphoethanolamine + H2O = N-hexadecanoyl-1-(9Z-octadecenoyl)-sn-glycero-3-phosphoethanolamine + (9Z)-octadecenoate + H(+). The catalysed reaction is 1,2-dihexadecanoyl-sn-glycero-3-phospho-(1'-sn-glycerol) + H2O = 1-hexadecanoyl-sn-glycero-3-phospho-(1'-sn-glycerol) + hexadecanoate + H(+). It catalyses the reaction 1-hexadecanoyl-2-(9Z-octadecenoyl)-sn-glycero-3-phosphoglycerol + H2O = 1-hexadecanoyl-sn-glycero-3-phosphoglycerol + (9Z)-octadecenoate + H(+). It carries out the reaction 1-hexadecanoyl-2-(9Z-octadecenoyl)-sn-glycero-3-phospho-(1'-sn-glycerol) + H2O = 1-hexadecanoyl-sn-glycero-3-phospho-(1'-sn-glycerol) + (9Z)-octadecenoate + H(+). The enzyme catalyses a 1,2-diacyl-sn-glycero-3-phosphocholine + H2O = a 1-acyl-sn-glycero-3-phosphocholine + a fatty acid + H(+). The catalysed reaction is 1,2-dihexadecanoyl-sn-glycero-3-phosphocholine + H2O = 1-hexadecanoyl-sn-glycero-3-phosphocholine + hexadecanoate + H(+). It catalyses the reaction 1-hexadecanoyl-2-(9Z-octadecenoyl)-sn-glycero-3-phosphocholine + H2O = 1-hexadecanoyl-sn-glycero-3-phosphocholine + (9Z)-octadecenoate + H(+). It carries out the reaction 1-hexadecanoyl-2-(9Z,12Z-octadecadienoyl)-sn-glycero-3-phosphocholine + H2O = (9Z,12Z)-octadecadienoate + 1-hexadecanoyl-sn-glycero-3-phosphocholine + H(+). The enzyme catalyses 1-hexadecanoyl-2-(4Z,7Z,10Z,13Z,16Z,19Z-docosahexaenoyl)-sn-glycero-3-phosphocholine + H2O = (4Z,7Z,10Z,13Z,16Z,19Z)-docosahexaenoate + 1-hexadecanoyl-sn-glycero-3-phosphocholine + H(+). Secretory calcium-dependent phospholipase A2 that primarily targets extracellular phospholipids with implications in host antimicrobial defense, inflammatory response and tissue regeneration. Hydrolyzes the ester bond of the fatty acyl group attached at sn-2 position of phospholipids (phospholipase A2 activity) with preference for phosphatidylethanolamines and phosphatidylglycerols over phosphatidylcholines. Contributes to lipid remodeling of cellular membranes and generation of lipid mediators involved in pathogen clearance. Displays bactericidal activity against Gram-positive bacteria by directly hydrolyzing phospholipids of the bacterial membrane. Upon sterile inflammation, targets membrane phospholipids of extracellular mitochondria released from activated platelets, generating free unsaturated fatty acids such as arachidonate that is used by neighboring leukocytes to synthesize inflammatory eicosanoids such as leukotrienes. Simultaneously, by compromising mitochondrial membrane integrity, promotes the release in circulation of potent damage-associated molecular pattern molecules that activate the innate immune response. Plays a stem cell regulator role in the intestinal crypt. Within intracellular compartment mediates Paneth cell differentiation and its stem cell supporting functions by inhibiting Wnt signaling pathway in intestinal stem cell (ICS). Secreted in the intestinal lumen upon inflammation, acts in an autocrine way and promotes prostaglandin E2 synthesis that stimulates Wnt signaling pathway in ICS cells and tissue regeneration. May play a role in the biosynthesis of N-acyl ethanolamines that regulate energy metabolism and inflammation. Hydrolyzes N-acyl phosphatidylethanolamines to N-acyl lysophosphatidylethanolamines, which are further cleaved by a lysophospholipase D to release N-acyl ethanolamines. Independent of its catalytic activity, acts as a ligand for integrins. Binds to and activates integrins ITGAV:ITGB3, ITGA4:ITGB1 and ITGA5:ITGB1. Binds to a site (site 2) which is distinct from the classical ligand-binding site (site 1) and induces integrin conformational changes and enhanced ligand binding to site 1. Induces cell proliferation in an integrin-dependent manner. This Rattus norvegicus (Rat) protein is Phospholipase A2, membrane associated (Pla2g2a).